Consider the following 462-residue polypeptide: tRNA(Ile)-lysidine synthase (462 aa).

27–32 (SGGPDS) serves as a coordination point for ATP.

Belongs to the tRNA(Ile)-lysidine synthase family.

The protein resides in the cytoplasm. It catalyses the reaction cytidine(34) in tRNA(Ile2) + L-lysine + ATP = lysidine(34) in tRNA(Ile2) + AMP + diphosphate + H(+). Ligates lysine onto the cytidine present at position 34 of the AUA codon-specific tRNA(Ile) that contains the anticodon CAU, in an ATP-dependent manner. Cytidine is converted to lysidine, thus changing the amino acid specificity of the tRNA from methionine to isoleucine. The polypeptide is tRNA(Ile)-lysidine synthase (Clostridioides difficile (strain 630) (Peptoclostridium difficile)).